The chain runs to 332 residues: 5-formaminoimidazole-4-carboxamide-1-(beta)-D-ribofuranosyl 5'-monophosphate synthetase (332 aa).

2 residues coordinate 5-amino-1-(5-phospho-beta-D-ribosyl)imidazole-4-carboxamide: His9 and Ser72. An ATP-grasp domain is found at 93–323 (RNLFPWESNQ…IGREINLAIQ (231 aa)). Residues 123–183 (PEDV…IPMY) and Glu205 each bind ATP. Asn229 serves as a coordination point for 5-amino-1-(5-phospho-beta-D-ribosyl)imidazole-4-carboxamide. Residues Glu268 and Glu281 each contribute to the Mg(2+) site.

It belongs to the phosphohexose mutase family. Mg(2+) serves as cofactor. It depends on Mn(2+) as a cofactor.

The catalysed reaction is 5-amino-1-(5-phospho-beta-D-ribosyl)imidazole-4-carboxamide + formate + ATP = 5-formamido-1-(5-phospho-D-ribosyl)imidazole-4-carboxamide + ADP + phosphate. It functions in the pathway purine metabolism; IMP biosynthesis via de novo pathway; 5-formamido-1-(5-phospho-D-ribosyl)imidazole-4-carboxamide from 5-amino-1-(5-phospho-D-ribosyl)imidazole-4-carboxamide (formate route): step 1/1. Functionally, catalyzes the ATP- and formate-dependent formylation of 5-aminoimidazole-4-carboxamide-1-beta-d-ribofuranosyl 5'-monophosphate (AICAR) to 5-formaminoimidazole-4-carboxamide-1-beta-d-ribofuranosyl 5'-monophosphate (FAICAR) in the absence of folates. The chain is 5-formaminoimidazole-4-carboxamide-1-(beta)-D-ribofuranosyl 5'-monophosphate synthetase from Metallosphaera sedula (strain ATCC 51363 / DSM 5348 / JCM 9185 / NBRC 15509 / TH2).